A 530-amino-acid chain; its full sequence is Ubiquitin carboxyl-terminal hydrolase 17-like protein 17 (530 aa).

In terms of domain architecture, USP spans 80 to 375 (AGLQNMGNTC…QAYVLFYIQK (296 aa)). The active-site Nucleophile is C89. The active-site Proton acceptor is the H334. Basic and acidic residues-rich tracts occupy residues 382–392 (SESVSRGREPR) and 398–411 (DTDRRATQGELKRD). 2 disordered regions span residues 382–411 (SESVSRGREPRALGAEDTDRRATQGELKRD) and 477–530 (NHHP…LVCQ). Over residues 493 to 505 (TPTHQESMNTGTL) the composition is skewed to polar residues. Positions 510 to 524 (GRARRSKGKNKHSKR) are enriched in basic residues.

This sequence belongs to the peptidase C19 family. USP17 subfamily.

Its subcellular location is the nucleus. It localises to the endoplasmic reticulum. The catalysed reaction is Thiol-dependent hydrolysis of ester, thioester, amide, peptide and isopeptide bonds formed by the C-terminal Gly of ubiquitin (a 76-residue protein attached to proteins as an intracellular targeting signal).. Functionally, deubiquitinating enzyme that removes conjugated ubiquitin from specific proteins to regulate different cellular processes that may include cell proliferation, progression through the cell cycle, apoptosis, cell migration, and the cellular response to viral infection. The polypeptide is Ubiquitin carboxyl-terminal hydrolase 17-like protein 17 (USP17L17) (Homo sapiens (Human)).